We begin with the raw amino-acid sequence, 255 residues long: Reticulon-like protein B3 (255 aa).

Residues 1 to 25 (MAEEHKHEESIMEKISEKIHGHDDS) are compositionally biased toward basic and acidic residues. The segment at 1–38 (MAEEHKHEESIMEKISEKIHGHDDSSSSSSDSDDDKNS) is disordered. Ala2 carries the post-translational modification N-acetylalanine. Positions 64–255 (PADIFLWRNK…GAFAFIKKKD (192 aa)) constitute a Reticulon domain. 3 helical membrane-spanning segments follow: residues 75–95 (VSGG…LLEY), 97–117 (LLTL…LWSS), and 186–206 (CNFL…PVLY).

The protein resides in the endoplasmic reticulum membrane. It is found in the vacuole membrane. The polypeptide is Reticulon-like protein B3 (RTNLB3) (Arabidopsis thaliana (Mouse-ear cress)).